We begin with the raw amino-acid sequence, 465 residues long: Putative adhesin P1-like protein MPN_286 (465 aa).

3 disordered regions span residues 9–48 (GNGH…STFS), 59–78 (QGTL…PKWP), and 93–167 (WRND…LPPN). A compositionally biased stretch (low complexity) spans 21–37 (SNSSTSGVTTQGQQSQN). Residues 38-48 (ASGTEPASTFS) are compositionally biased toward polar residues. Residues 111-131 (TSATGSGQQGSSSGTTNSAGN) are compositionally biased toward low complexity. Residues 135 to 144 (LKQDKVDKSG) are compositionally biased toward basic and acidic residues. Positions 145 to 156 (DSVTVAETTSGD) are enriched in polar residues. A compositionally biased stretch (low complexity) spans 157 to 167 (NLTNYTNLPPN).

This sequence belongs to the adhesin P1 family.

This chain is Putative adhesin P1-like protein MPN_286, found in Mycoplasma pneumoniae (strain ATCC 29342 / M129 / Subtype 1) (Mycoplasmoides pneumoniae).